The primary structure comprises 233 residues: Snake venom serine protease BthaTL (233 aa).

The Peptidase S1 domain maps to 1–224 (VIGGDECDIN…YLPWIQSIIA (224 aa)). 6 disulfides stabilise this stretch: Cys-7–Cys-138, Cys-25–Cys-41, Cys-73–Cys-231, Cys-117–Cys-185, Cys-149–Cys-164, and Cys-175–Cys-200. Residues His-40 and Asp-85 each act as charge relay system in the active site. Ser-179 functions as the Charge relay system in the catalytic mechanism.

This sequence belongs to the peptidase S1 family. Snake venom subfamily. Monomer. Expressed by the venom gland.

It localises to the secreted. Snake venom serine protease that may act in the hemostasis system of the prey. The polypeptide is Snake venom serine protease BthaTL (Bothrops alternatus (Urutu)).